The primary structure comprises 303 residues: Elongation factor Ts (303 aa).

Residues 79–82 are involved in Mg(2+) ion dislocation from EF-Tu; that stretch reads TDFV.

This sequence belongs to the EF-Ts family.

Its subcellular location is the cytoplasm. Functionally, associates with the EF-Tu.GDP complex and induces the exchange of GDP to GTP. It remains bound to the aminoacyl-tRNA.EF-Tu.GTP complex up to the GTP hydrolysis stage on the ribosome. The protein is Elongation factor Ts of Syntrophotalea carbinolica (strain DSM 2380 / NBRC 103641 / GraBd1) (Pelobacter carbinolicus).